Reading from the N-terminus, the 861-residue chain is Ataxin-7-like protein 1 (861 aa).

Disordered stretches follow at residues 1 to 31 (MTSE…AMAT), 154 to 189 (GHHS…KGSR), 342 to 448 (KSRE…GADE), 606 to 673 (PIPA…LSGP), and 772 to 861 (FDKS…RTLP). Residues 284–351 (RRLSEREFDP…KSREKEVKDK (68 aa)) enclose the SCA7 domain. Positions 342–354 (KSREKEVKDKEHL) are enriched in basic and acidic residues. A compositionally biased stretch (polar residues) spans 355–369 (LTSTREILPSQSGPA). 3 stretches are compositionally biased toward low complexity: residues 372 to 381 (SLLGSSGSSG), 403 to 417 (SSAN…SNHS), and 606 to 616 (PIPAVIPSPSH). Over residues 617 to 627 (KPSKTKTSKSS) the composition is skewed to basic residues. Positions 628–641 (KVKDLSTRSDESPS) are enriched in basic and acidic residues. Composition is skewed to low complexity over residues 648–671 (QSST…SPLS) and 783–794 (SSSSSKACKITK). A compositionally biased stretch (polar residues) spans 817 to 828 (VNSTSSRQVGKN). Residues 829 to 847 (SSLALSQSSPSSISSPGHS) are compositionally biased toward low complexity.

This is Ataxin-7-like protein 1 (ATXN7L1) from Homo sapiens (Human).